The chain runs to 186 residues: uncharacterized protein (186 aa).

To M.jannaschii MJ0208.

This is an uncharacterized protein from Methanocaldococcus jannaschii (strain ATCC 43067 / DSM 2661 / JAL-1 / JCM 10045 / NBRC 100440) (Methanococcus jannaschii).